The following is a 147-amino-acid chain: UPF0735 ACT domain-containing protein ABC1543 (147 aa).

The ACT domain occupies 70–145 (TFSINLADRS…SVERVELVGS (76 aa)).

It belongs to the UPF0735 family.

The polypeptide is UPF0735 ACT domain-containing protein ABC1543 (Shouchella clausii (strain KSM-K16) (Alkalihalobacillus clausii)).